A 550-amino-acid chain; its full sequence is Glucagon-like peptide 2 receptor (550 aa).

Residues 1–173 (MRPQPSPAVP…SFRQNVDHYA (173 aa)) are Extracellular-facing. 3 cysteine pairs are disulfide-bonded: Cys-83/Cys-105, Cys-96/Cys-137, and Cys-118/Cys-159. N-linked (GlcNAc...) asparagine glycans are attached at residues Asn-97, Asn-113, Asn-148, and Asn-162. The chain crosses the membrane as a helical span at residues 174 to 198 (LLYTLQLMYTVGYSVSLISLFLALT). Topologically, residues 199–210 (LFLFLRKLHCTR) are cytoplasmic. The helical transmembrane segment at 211 to 235 (NYIHMNLFASFILKVLAVLVKDMVS) threads the bilayer. Residues 236–261 (HNSYSKRPDDESGWMSYLSETSVSCR) lie on the Extracellular side of the membrane. A helical transmembrane segment spans residues 262 to 285 (SVQVLLHYFVGTNHLWLLVEGLYL). The Cytoplasmic segment spans residues 286–299 (HTLLEPTVFPERRL). A helical transmembrane segment spans residues 300 to 321 (WPKYLVVGWAFPMLFVIPWGFA). Residues 322 to 339 (RAHLENTRCWATNGNLKI) lie on the Extracellular side of the membrane. Residues 340–362 (WWIIRGPMLLCVTVNFFIFLKIL) traverse the membrane as a helical segment. Topologically, residues 363–386 (KLLISKLKAHQMCFRDYKYRLAKS) are cytoplasmic. The helical transmembrane segment at 387 to 405 (TLLLIPLLGVHEVLFTFFP) threads the bilayer. The Extracellular portion of the chain corresponds to 406–417 (DDQVQGFSKRIR). A helical membrane pass occupies residues 418–438 (LFIQLTLSSVHGFLVALQYGF). The Cytoplasmic segment spans residues 439-550 (ANGEVKAELR…MEEILEESEI (112 aa)).

This sequence belongs to the G-protein coupled receptor 2 family.

The protein resides in the cell membrane. Its function is as follows. This is a receptor for glucagon-like peptide 2. The activity of this receptor is mediated by G proteins which activate adenylyl cyclase. The polypeptide is Glucagon-like peptide 2 receptor (Glp2r) (Rattus norvegicus (Rat)).